The primary structure comprises 349 residues: Protein-glutamate methylesterase/protein-glutamine glutaminase (349 aa).

The Response regulatory domain maps to 5–122 (KVLVVDDSAF…SLDLYKVKDE (118 aa)). D56 is modified (4-aspartylphosphate). Residues 156-349 (ARPQQAIVAI…AAAIVQLIGE (194 aa)) enclose the CheB-type methylesterase domain. Active-site residues include S168, H195, and D291.

This sequence belongs to the CheB family. Phosphorylated by CheA. Phosphorylation of the N-terminal regulatory domain activates the methylesterase activity.

The protein resides in the cytoplasm. It carries out the reaction [protein]-L-glutamate 5-O-methyl ester + H2O = L-glutamyl-[protein] + methanol + H(+). It catalyses the reaction L-glutaminyl-[protein] + H2O = L-glutamyl-[protein] + NH4(+). Functionally, involved in chemotaxis. Part of a chemotaxis signal transduction system that modulates chemotaxis in response to various stimuli. Catalyzes the demethylation of specific methylglutamate residues introduced into the chemoreceptors (methyl-accepting chemotaxis proteins or MCP) by CheR. Also mediates the irreversible deamidation of specific glutamine residues to glutamic acid. The polypeptide is Protein-glutamate methylesterase/protein-glutamine glutaminase (Geobacillus kaustophilus (strain HTA426)).